A 380-amino-acid polypeptide reads, in one-letter code: Geranylgeranyl pyrophosphate synthase cle6 (380 aa).

The span at 1–19 shows a compositional bias: low complexity; it reads MHSVRTSTTSTSSMVSSTM. The disordered stretch occupies residues 1–55; it reads MHSVRTSTTSTSSMVSSTMHPFDAFNAPQPYQQHHPPRWNIHNPHFSQTNGHSIQ. The segment covering 45-55 has biased composition (polar residues); it reads HFSQTNGHSIQ. Isopentenyl diphosphate contacts are provided by Lys102, Arg105, and His134. Asp141 and Asp145 together coordinate Mg(2+). Arg150 contacts dimethylallyl diphosphate. Arg151 contacts isopentenyl diphosphate. Dimethylallyl diphosphate contacts are provided by Lys229, Thr230, and Gln263. Asp266 contributes to the Mg(2+) binding site. Dimethylallyl diphosphate-binding residues include Asn270, Lys280, and Lys290.

It belongs to the FPP/GGPP synthase family. Requires Mg(2+) as cofactor.

The catalysed reaction is isopentenyl diphosphate + dimethylallyl diphosphate = (2E)-geranyl diphosphate + diphosphate. It catalyses the reaction isopentenyl diphosphate + (2E)-geranyl diphosphate = (2E,6E)-farnesyl diphosphate + diphosphate. It carries out the reaction isopentenyl diphosphate + (2E,6E)-farnesyl diphosphate = (2E,6E,10E)-geranylgeranyl diphosphate + diphosphate. It functions in the pathway secondary metabolite biosynthesis; terpenoid biosynthesis. In terms of biological role, geranylgeranyl pyrophosphate synthase; part of the cluster A that mediates the biosynthesis of chevalone E and its oxidized derivatives that possess a unique five-membered lactone ring and can synergistically enhance the cytotoxicity of doxorubicin (DOX) in breast cancer cells. Within the pathway, cle6 takes part to the biosynthesis of the molecular scaffold by providing geranylgeranyl pyrophosphate (GGPP) to the prenyltransferase cle5 for C-3 geranylgeranylation of triacetic acid lactone. The molecular scaffold is commonly biosynthesized by a series of enzymes including the non-reducing polyketide synthase (NR-PKS) cle1 that produces the alpha-pyrone triacetic acid lactone (TAL); The membrane-bound prenyltransferase cle5 that accepts TAL as its substrate to perform a C-3 geranylgeranylation reaction, in which the pathway-dedicated GGPS cle6 is required to provide GGPP, the other substrate of cle5; the FAD-dependent monooxygenase Cle3 that forms an (S)-epoxide ring at the terminal olefin of the geranylgeranyl group; and the terpene cyclase Cle7 that catalyzes the cyclization of the prenyl group that yields the pentacyclic pathway intermediate chevalone E. Chevalone E can derivatize into seven new oxidized analogs by the cytochrome P450 monooxygenases cle2 (acting at C-20) and cle4 (acting at C-11 and C-12). The chain is Geranylgeranyl pyrophosphate synthase cle6 from Aspergillus versicolor.